Here is a 107-residue protein sequence, read N- to C-terminus: MKNAFTLLFETIKERKRNPLSESYTNYLFSKGEDKILKKIGEECTEVIIASKNNDNEELVKEMVDVMYHCFVLLAEKNISLEDIMEEVTERNGKLSRVGDRREIDTL.

The protein belongs to the PRA-PH family.

It is found in the cytoplasm. The catalysed reaction is 1-(5-phospho-beta-D-ribosyl)-ATP + H2O = 1-(5-phospho-beta-D-ribosyl)-5'-AMP + diphosphate + H(+). The protein operates within amino-acid biosynthesis; L-histidine biosynthesis; L-histidine from 5-phospho-alpha-D-ribose 1-diphosphate: step 2/9. The polypeptide is Phosphoribosyl-ATP pyrophosphatase (Bacillus cereus (strain AH187)).